The sequence spans 316 residues: MAKSQMALCCMSHSPLLNLPGPAQELLDDIEGAIAAAREFVAAFDPDLVVTFSPDHYNGFFYRAMPPFCVGTAAAGVGDYGTYQGPLDVPADLAIDCARAVLDSDVDVAVSAAMDVDHGTVQPLQKLFGDATAKPVIPVFVNSVATPLGPMRRVRALGAAVGTHLAGLGKRVLVIGSGGLSHDPPVPTLATAPPAALDRIVRGVPMTTEQRQARQAAVIEAAREFASGQGALAPLNPDWDRAFLDLLDNGRLAEVDSWDNRWIAEQAGNSAHEVRTWVAAFAALAAQGKYETGNRYYRAAPELIAGFAIRTAVCTS.

The Proton donor role is filled by H118. The Proton acceptor role is filled by H182.

Belongs to the LigB/MhpB extradiol dioxygenase family. Homotetramer. Fe(2+) serves as cofactor.

It carries out the reaction 3-(2,3-dihydroxyphenyl)propanoate + O2 = (2Z,4E)-2-hydroxy-6-oxonona-2,4-dienedioate + H(+). It catalyses the reaction (2E)-3-(2,3-dihydroxyphenyl)prop-2-enoate + O2 = (2Z,4E,7E)-2-hydroxy-6-oxonona-2,4,7-trienedioate + H(+). It functions in the pathway aromatic compound metabolism; 3-phenylpropanoate degradation. In terms of biological role, catalyzes the non-heme iron(II)-dependent oxidative cleavage of 2,3-dihydroxyphenylpropionic acid and 2,3-dihydroxicinnamic acid into 2-hydroxy-6-ketononadienedioate and 2-hydroxy-6-ketononatrienedioate, respectively. This chain is 2,3-dihydroxyphenylpropionate/2,3-dihydroxicinnamic acid 1,2-dioxygenase, found in Mycolicibacterium vanbaalenii (strain DSM 7251 / JCM 13017 / BCRC 16820 / KCTC 9966 / NRRL B-24157 / PYR-1) (Mycobacterium vanbaalenii).